Reading from the N-terminus, the 72-residue chain is DNA gyrase inhibitor YacG (72 aa).

The Zn(2+) site is built by Cys17, Cys20, Cys32, and Cys36. The disordered stretch occupies residues Ile51 to Arg72.

Belongs to the DNA gyrase inhibitor YacG family. In terms of assembly, interacts with GyrB. Zn(2+) serves as cofactor.

Inhibits all the catalytic activities of DNA gyrase by preventing its interaction with DNA. Acts by binding directly to the C-terminal domain of GyrB, which probably disrupts DNA binding by the gyrase. This chain is DNA gyrase inhibitor YacG, found in Methylorubrum extorquens (strain PA1) (Methylobacterium extorquens).